The following is a 662-amino-acid chain: UPF0313 protein CPE1196 (662 aa).

One can recognise a Radical SAM core domain in the interval 296-567 (AIEEVKFSLV…AMQRALLQFK (272 aa)). [4Fe-4S] cluster-binding residues include cysteine 310, cysteine 314, and cysteine 317. The disordered stretch occupies residues 597–662 (RDKNSFGKGN…QRGSKGKKRR (66 aa)). A compositionally biased stretch (basic and acidic residues) spans 618–632 (NRNENSGRRESEDKK). Residues 633 to 644 (RSSHSKKQRGNK) are compositionally biased toward basic residues.

The protein belongs to the UPF0313 family. [4Fe-4S] cluster is required as a cofactor.

The protein is UPF0313 protein CPE1196 of Clostridium perfringens (strain 13 / Type A).